Consider the following 271-residue polypeptide: NH(3)-dependent NAD(+) synthetase (271 aa).

43–50 (GISGGQDS) contributes to the ATP binding site. Aspartate 49 provides a ligand contact to Mg(2+). Arginine 137 is a binding site for deamido-NAD(+). Threonine 157 provides a ligand contact to ATP. Glutamate 162 is a Mg(2+) binding site. Positions 170 and 177 each coordinate deamido-NAD(+). Residues lysine 186 and threonine 208 each coordinate ATP. Deamido-NAD(+) is bound at residue 257-258 (HK).

The protein belongs to the NAD synthetase family. In terms of assembly, homodimer.

It catalyses the reaction deamido-NAD(+) + NH4(+) + ATP = AMP + diphosphate + NAD(+) + H(+). The protein operates within cofactor biosynthesis; NAD(+) biosynthesis; NAD(+) from deamido-NAD(+) (ammonia route): step 1/1. In terms of biological role, catalyzes the ATP-dependent amidation of deamido-NAD to form NAD. Uses ammonia as a nitrogen source. The polypeptide is NH(3)-dependent NAD(+) synthetase (Exiguobacterium sp. (strain ATCC BAA-1283 / AT1b)).